The primary structure comprises 261 residues: tRNA pseudouridine synthase A (261 aa).

The Nucleophile role is filled by Asp-55. Tyr-114 is a substrate binding site.

Belongs to the tRNA pseudouridine synthase TruA family. In terms of assembly, homodimer.

The enzyme catalyses uridine(38/39/40) in tRNA = pseudouridine(38/39/40) in tRNA. Its function is as follows. Formation of pseudouridine at positions 38, 39 and 40 in the anticodon stem and loop of transfer RNAs. The protein is tRNA pseudouridine synthase A of Paracoccus denitrificans (strain Pd 1222).